A 123-amino-acid polypeptide reads, in one-letter code: UPF0102 protein DR_2282 (123 aa).

It belongs to the UPF0102 family.

The protein is UPF0102 protein DR_2282 of Deinococcus radiodurans (strain ATCC 13939 / DSM 20539 / JCM 16871 / CCUG 27074 / LMG 4051 / NBRC 15346 / NCIMB 9279 / VKM B-1422 / R1).